A 152-amino-acid polypeptide reads, in one-letter code: RxLR effector protein Avrblb1 (152 aa).

Positions 1-24 (MRSLLLTVLLNLVVLLATTGAVSS) are cleaved as a signal peptide. Positions 51–72 (RSLRGDYNNEVTKEPNTSDEER) match the RxLR-dEER motif. The short motif at 54-56 (RGD) is the RGD RLK-binding motif element. Residue asparagine 66 is glycosylated (N-linked (GlcNAc...) asparagine). The tract at residues 99 to 152 (QSKTVLRYEDKLFTALYKSGETPRSLRTKHLDKASASVFFNRFKKWYDKNVGPS) is w motif.

Belongs to the RxLR effector family. In terms of assembly, interacts with host defense protein RGA2/Rpi-blb1. Interacts with host legume-type lectin receptor kinase LECRK19.

It localises to the secreted. Its subcellular location is the host nucleus. The protein resides in the host nucleolus. The protein localises to the host cell membrane. Secreted effector that acts as an elicitor of hypersensitive response (HR) specifically on plants carrying defense protein RGA2/Rpi-blb1. Enhances P.infestans colonization of plant hosts Nicotiana benthamiana and potato Solanum bulbocastanum leaves. Associates with host legume-type lectin receptor kinases and disrupts attachments between the host plasma membrane and cell wall. This chain is RxLR effector protein Avrblb1, found in Phytophthora infestans (strain T30-4) (Potato late blight agent).